The primary structure comprises 464 residues: C-terminal processing peptidase, chloroplastic (464 aa).

Residues 1–32 (MHSRTNCLQTSVRAPQPHFRPFTAVKTCRQRC) constitute a chloroplast transit peptide. The N-terminal 45 residues, 33–77 (STTAAAAKRDQAQEQQPWIQVGLGLAAAATAVAVGLGAAALPAQA), are a transit peptide targeting the thylakoid. In terms of domain architecture, PDZ spans 149 to 234 (LAALRRGTAG…SQVEVVLHAP (86 aa)). Residues Ser372 and Lys397 each act as charge relay system in the active site.

The protein belongs to the peptidase S41A family. As to quaternary structure, monomer.

The protein resides in the plastid. It is found in the chloroplast thylakoid lumen. The catalysed reaction is The enzyme shows specific recognition of a C-terminal tripeptide, Xaa-Yaa-Zaa, in which Xaa is preferably Ala or Leu, Yaa is preferably Ala or Tyr, and Zaa is preferably Ala, but then cleaves at a variable distance from the C-terminus. A typical cleavage is -Ala-Ala-|-Arg-Ala-Ala-Lys-Glu-Asn-Tyr-Ala-Leu-Ala-Ala.. Its activity is regulated as follows. Not inhibited by antipain, 4-amidinophenylmethanesulfonyl fluoride, aprotinin, chymostatin, 3,4-dichloroisocoumarin, diisopropyl fluorophosphate, E64, EDTA, EGTA, iodoacetamide, leupeptin, pepstatin, o-phenanthroline, N-ethylmaleimide, phosphoramidon or phenylmethylsulfonyl fluoride. Protease involved in the C-terminal processing of the chloroplastic D1 protein of photosystem II. This proteolytic processing is necessary to allow the light-driven assembly of the tetranuclear manganese cluster, which is responsible for photosynthetic water oxidation. In Tetradesmus obliquus (Green alga), this protein is C-terminal processing peptidase, chloroplastic (ctpA).